The chain runs to 208 residues: MLKLAIPKGRLEEKVMTYLKKTGVIFERESSILREGKDIVCFMVRPFDVPTYLVHGVADIGFCGTDVLLEKETSLIQPFFIPTNISRMVLAGPKGRGIPEGEKRIATKFPNVTQRYCESKGWHCRIIPLKGSVELAPIAGLSDLIVDITETGRTLKENNLEILDEIFVIRTHVVVNPVSYRTKREEVVSFLEKLQEVIEHDSNEQSRG.

This sequence belongs to the ATP phosphoribosyltransferase family. Short subfamily. Heteromultimer composed of HisG and HisZ subunits.

The protein localises to the cytoplasm. It catalyses the reaction 1-(5-phospho-beta-D-ribosyl)-ATP + diphosphate = 5-phospho-alpha-D-ribose 1-diphosphate + ATP. It functions in the pathway amino-acid biosynthesis; L-histidine biosynthesis; L-histidine from 5-phospho-alpha-D-ribose 1-diphosphate: step 1/9. Its function is as follows. Catalyzes the condensation of ATP and 5-phosphoribose 1-diphosphate to form N'-(5'-phosphoribosyl)-ATP (PR-ATP). Has a crucial role in the pathway because the rate of histidine biosynthesis seems to be controlled primarily by regulation of HisG enzymatic activity. In Thermotoga maritima (strain ATCC 43589 / DSM 3109 / JCM 10099 / NBRC 100826 / MSB8), this protein is ATP phosphoribosyltransferase (hisG).